Here is a 591-residue protein sequence, read N- to C-terminus: MAERTHACGKVTVEAVGQTVQLKGWVQKRRDLGGLIFIDLRDRTGIVQVVFNPETSKEALEVAETIRSEYVLHVEGTVVERGEGAINDNMATGRIEVQATKVNVLNAAKTTPIIIADDTDASEDVRLKYRYLDLRRPVMFNTFKMRHDVTKTIRNFLDTEEFLEVETPILTKSTPEGARDYLVPSRVHDGEFYALPQSPQLFKQLLMVGGFERYYQVARCFRDEDLRADRQPEFTQIDIEASFLTQEEILDMMERMMTKVMKDAKGVEISAPFPRMTYADAMARYGSDKPDTRFEMELTDLSEFAAGCGFKVFTSAVESGGQVKAINAKGAASKYSRKDIDALTEFVKVYGAKGLAWLKVEEDGLKGPIAKFFGEEDANVLMTTLEATAGDLLLFVADKKSVVADSLGALRLRLGKELELIDESKYNFLWVTDWPLLEYDEDADRYFAAHHPFTMPFREDVELLETAPEKARAQAYDLVLNGYELGGGSLRIYERDVQEKMFKALGFSQEEAQEQFGFLLEAFEYGTPPHGGIALGLDRLVMLLAGRTNLRDTIAFPKTASASCLLTEAPSPVAEAQLEELNLKLSLKEEK.

E176 contributes to the L-aspartate binding site. The segment at Q200–K203 is aspartate. R222 contacts L-aspartate. Residues R222 to E224 and Q231 contribute to the ATP site. Residue H450 participates in L-aspartate binding. Residue E484 participates in ATP binding. R491 is an L-aspartate binding site. G536–R539 provides a ligand contact to ATP.

The protein belongs to the class-II aminoacyl-tRNA synthetase family. Type 1 subfamily. In terms of assembly, homodimer.

The protein localises to the cytoplasm. It carries out the reaction tRNA(Asx) + L-aspartate + ATP = L-aspartyl-tRNA(Asx) + AMP + diphosphate. In terms of biological role, aspartyl-tRNA synthetase with relaxed tRNA specificity since it is able to aspartylate not only its cognate tRNA(Asp) but also tRNA(Asn). Reaction proceeds in two steps: L-aspartate is first activated by ATP to form Asp-AMP and then transferred to the acceptor end of tRNA(Asp/Asn). This Bacillus cereus (strain ATCC 10987 / NRS 248) protein is Aspartate--tRNA(Asp/Asn) ligase.